A 124-amino-acid chain; its full sequence is Small ribosomal subunit protein eS6 (124 aa).

This sequence belongs to the eukaryotic ribosomal protein eS6 family.

The sequence is that of Small ribosomal subunit protein eS6 from Methanococcus maripaludis (strain C7 / ATCC BAA-1331).